The chain runs to 133 residues: ATP synthase epsilon chain, chloroplastic (133 aa).

Belongs to the ATPase epsilon chain family. In terms of assembly, F-type ATPases have 2 components, CF(1) - the catalytic core - and CF(0) - the membrane proton channel. CF(1) has five subunits: alpha(3), beta(3), gamma(1), delta(1), epsilon(1). CF(0) has three main subunits: a, b and c.

It localises to the plastid. Its subcellular location is the chloroplast thylakoid membrane. Its function is as follows. Produces ATP from ADP in the presence of a proton gradient across the membrane. The polypeptide is ATP synthase epsilon chain, chloroplastic (Vitis vinifera (Grape)).